We begin with the raw amino-acid sequence, 55 residues long: UPF0391 membrane protein Sfum_0248 (55 aa).

Helical transmembrane passes span 4–24 (WALI…GGII) and 28–48 (AWIA…SLLS).

It belongs to the UPF0391 family.

It is found in the cell membrane. The chain is UPF0391 membrane protein Sfum_0248 from Syntrophobacter fumaroxidans (strain DSM 10017 / MPOB).